Here is a 353-residue protein sequence, read N- to C-terminus: Ribosome biogenesis protein BRX1 homolog (353 aa).

Residues Met1–Pro50 are disordered. Over residues Asp34–Ile47 the composition is skewed to basic and acidic residues. The Brix domain maps to Glu60–Gly249. Residue Lys160 forms a Glycyl lysine isopeptide (Lys-Gly) (interchain with G-Cter in SUMO2) linkage. Ser261 carries the post-translational modification Phosphoserine. At Lys276 the chain carries N6-acetyllysine. Residues Lys314 and Lys322 each participate in a glycyl lysine isopeptide (Lys-Gly) (interchain with G-Cter in SUMO2) cross-link. The span at Arg334–Gln344 shows a compositional bias: basic residues. The segment at Arg334–Lys353 is disordered.

It belongs to the BRX1 family.

The protein localises to the nucleus. The protein resides in the nucleolus. Its function is as follows. Required for biogenesis of the 60S ribosomal subunit. This is Ribosome biogenesis protein BRX1 homolog (Brix1) from Mus musculus (Mouse).